The chain runs to 1709 residues: Protein SHORTAGE IN CHIASMATA 1 homolog (1709 aa).

3 stretches are compositionally biased toward basic and acidic residues: residues 532–542 (PKLQDEDKHSD), 552–568 (DPQK…EGGT), and 1601–1613 (ESFR…DTPS). 2 disordered regions span residues 532-586 (PKLQ…SSFP) and 1566-1662 (KRKA…DPTW).

This sequence belongs to the XPF family. As to quaternary structure, interacts (via C-terminus) with PTD. Interacts with ZIP4. In terms of tissue distribution, highly expressed in anthers and pistil during meiosis. Expressed in pollen mother cells (PMCs) during meiosis. Expressed at low levels in roots, shoots, leaves, flowers, and glumes.

It is found in the chromosome. The protein resides in the nucleus. Its subcellular location is the cytoplasm. It localises to the cell membrane. Essential for normal crossover (CO) formation during meiosis. Essential component for the formation of class I meiotic COs. Interacts with PTD, another meiotic component, to regulate CO formation, possibly by stabilizing the recombination intermediates during meiosis. SHOC1 and PTD may form transient heterotrimeric or heterotetrameric complexes with HEI10 and/or ZIP4 to promote class I COs formation. Does not seem to be involved in early meiotic recombination steps involving double-strand break (DSB) formation, processing, and single-strand invasion. Does not seem to be involved in homologous pairing or synaptonemal complex (SC) assembly. The chain is Protein SHORTAGE IN CHIASMATA 1 homolog from Oryza sativa subsp. japonica (Rice).